A 141-amino-acid chain; its full sequence is MVLERTLSIIKPDAVAKNVIGDIYSRFEKAGLKVVAAKYKQLSRREAEGFYAVHRDRPFFNALVEFMISGPVMIQVLESENAVARHRELLGATNPKDAALGTIRADFAESIEANAAHGSDSVENAAIEVAYFFAATEIILR.

ATP contacts are provided by K11, F59, R87, T93, R104, and N114. Catalysis depends on H117, which acts as the Pros-phosphohistidine intermediate.

This sequence belongs to the NDK family. As to quaternary structure, homotetramer. Mg(2+) is required as a cofactor.

The protein localises to the cytoplasm. It catalyses the reaction a 2'-deoxyribonucleoside 5'-diphosphate + ATP = a 2'-deoxyribonucleoside 5'-triphosphate + ADP. The enzyme catalyses a ribonucleoside 5'-diphosphate + ATP = a ribonucleoside 5'-triphosphate + ADP. In terms of biological role, major role in the synthesis of nucleoside triphosphates other than ATP. The ATP gamma phosphate is transferred to the NDP beta phosphate via a ping-pong mechanism, using a phosphorylated active-site intermediate. This Xylella fastidiosa (strain 9a5c) protein is Nucleoside diphosphate kinase.